Reading from the N-terminus, the 201-residue chain is ATP-dependent Clp protease proteolytic subunit 2 (201 aa).

Serine 101 functions as the Nucleophile in the catalytic mechanism. Histidine 126 is an active-site residue.

This sequence belongs to the peptidase S14 family. In terms of assembly, fourteen ClpP subunits assemble into 2 heptameric rings which stack back to back to give a disk-like structure with a central cavity, resembling the structure of eukaryotic proteasomes.

It is found in the cytoplasm. It catalyses the reaction Hydrolysis of proteins to small peptides in the presence of ATP and magnesium. alpha-casein is the usual test substrate. In the absence of ATP, only oligopeptides shorter than five residues are hydrolyzed (such as succinyl-Leu-Tyr-|-NHMec, and Leu-Tyr-Leu-|-Tyr-Trp, in which cleavage of the -Tyr-|-Leu- and -Tyr-|-Trp bonds also occurs).. Functionally, cleaves peptides in various proteins in a process that requires ATP hydrolysis. Has a chymotrypsin-like activity. Plays a major role in the degradation of misfolded proteins. The chain is ATP-dependent Clp protease proteolytic subunit 2 from Prochlorococcus marinus subsp. pastoris (strain CCMP1986 / NIES-2087 / MED4).